The sequence spans 343 residues: N-acetyl-gamma-glutamyl-phosphate reductase (343 aa).

Residue Cys-147 is part of the active site.

This sequence belongs to the NAGSA dehydrogenase family. Type 1 subfamily.

It is found in the cytoplasm. The catalysed reaction is N-acetyl-L-glutamate 5-semialdehyde + phosphate + NADP(+) = N-acetyl-L-glutamyl 5-phosphate + NADPH + H(+). The protein operates within amino-acid biosynthesis; L-arginine biosynthesis; N(2)-acetyl-L-ornithine from L-glutamate: step 3/4. Functionally, catalyzes the NADPH-dependent reduction of N-acetyl-5-glutamyl phosphate to yield N-acetyl-L-glutamate 5-semialdehyde. The sequence is that of N-acetyl-gamma-glutamyl-phosphate reductase from Listeria innocua serovar 6a (strain ATCC BAA-680 / CLIP 11262).